The chain runs to 189 residues: Elongation factor P (189 aa).

It belongs to the elongation factor P family.

It localises to the cytoplasm. The protein operates within protein biosynthesis; polypeptide chain elongation. Its function is as follows. Involved in peptide bond synthesis. Stimulates efficient translation and peptide-bond synthesis on native or reconstituted 70S ribosomes in vitro. Probably functions indirectly by altering the affinity of the ribosome for aminoacyl-tRNA, thus increasing their reactivity as acceptors for peptidyl transferase. The polypeptide is Elongation factor P (Rhizobium johnstonii (strain DSM 114642 / LMG 32736 / 3841) (Rhizobium leguminosarum bv. viciae)).